A 199-amino-acid polypeptide reads, in one-letter code: uncharacterized protein (199 aa).

A run of 4 helical transmembrane segments spans residues 41–61 (LFIP…AFIC), 72–92 (SLIC…CSPW), 109–129 (TVWV…SIFV), and 145–165 (VTYS…LLNL).

This sequence to M.pneumoniae MPN_037.

The protein resides in the cell membrane. This is an uncharacterized protein from Mycoplasma pneumoniae (strain ATCC 29342 / M129 / Subtype 1) (Mycoplasmoides pneumoniae).